A 341-amino-acid chain; its full sequence is Methionine import ATP-binding protein MetN 2 (341 aa).

The 240-residue stretch at 2 to 241 (IELKEVVKEY…PQHTVTKRFV (240 aa)) folds into the ABC transporter domain. 38–45 (GFSGAGKS) contacts ATP.

The protein belongs to the ABC transporter superfamily. Methionine importer (TC 3.A.1.24) family. As to quaternary structure, the complex is composed of two ATP-binding proteins (MetN), two transmembrane proteins (MetI) and a solute-binding protein (MetQ).

The protein resides in the cell membrane. The enzyme catalyses L-methionine(out) + ATP + H2O = L-methionine(in) + ADP + phosphate + H(+). It carries out the reaction D-methionine(out) + ATP + H2O = D-methionine(in) + ADP + phosphate + H(+). Functionally, part of the ABC transporter complex MetNIQ involved in methionine import. Responsible for energy coupling to the transport system. This is Methionine import ATP-binding protein MetN 2 from Staphylococcus aureus (strain N315).